The following is a 285-amino-acid chain: MHTVWKGSISFGLVNVPVKMHAATETHEFHFNYLHKDCHNRIRYIKKCPHCEVEVAAENIIKGYEYEKDHYVIMEEEDLASLEAPLSRSIDILDFIDLSDIDPIYYQKSYYLSPEEAAHKAYKLLCQAMSDTGKVAIAKLTMRSKQHLACLRIIDQSIMVLETMYYPAEIRHLEASWDNVSPTDTEIAMARQLIENLAAPFAPEKYRDELREQVKELIEKKVSGETYRVAAAPEPGKVVDLMEALRASIAMTDQKKQQNTAESETEEKPTKSTLTPRGRRKVKGA.

A Ku domain is found at 9–176 (ISFGLVNVPV…PAEIRHLEAS (168 aa)). A disordered region spans residues 250 to 285 (AMTDQKKQQNTAESETEEKPTKSTLTPRGRRKVKGA).

It belongs to the prokaryotic Ku family. Homodimer. Interacts with LigD.

Functionally, with LigD forms a non-homologous end joining (NHEJ) DNA repair enzyme, which repairs dsDNA breaks with reduced fidelity. Binds linear dsDNA with 5'- and 3'- overhangs but not closed circular dsDNA nor ssDNA. Recruits and stimulates the ligase activity of LigD. This chain is Non-homologous end joining protein Ku, found in Desulfitobacterium hafniense (strain DSM 10664 / DCB-2).